The primary structure comprises 225 residues: MNATTAPLPYSAARLHELAHVLIANIRELAHAGWTPATSSNFSHRLDEQHAAITVSGRDKGRLVEEDIMVVDFDCLAVGRPLRPSAETLLHTQLYRRFPEICCVLHTHSPVQTIASRLYAGSDVIRLEGYELLKAFEGNTTHETAVEVPVFANTQDMQVLAAQVDALLDKQSMWGYLIEGHGLYAWGRSMAEARRHLEAFEFLLQCELELLKLRGTRQVVPVPHS.

Zn(2+)-binding residues include histidine 106 and histidine 108.

Belongs to the aldolase class II family. MtnB subfamily. Requires Zn(2+) as cofactor.

The enzyme catalyses 5-(methylsulfanyl)-D-ribulose 1-phosphate = 5-methylsulfanyl-2,3-dioxopentyl phosphate + H2O. Its pathway is amino-acid biosynthesis; L-methionine biosynthesis via salvage pathway; L-methionine from S-methyl-5-thio-alpha-D-ribose 1-phosphate: step 2/6. Its function is as follows. Catalyzes the dehydration of methylthioribulose-1-phosphate (MTRu-1-P) into 2,3-diketo-5-methylthiopentyl-1-phosphate (DK-MTP-1-P). This is Methylthioribulose-1-phosphate dehydratase from Xanthomonas oryzae pv. oryzae (strain MAFF 311018).